A 111-amino-acid chain; its full sequence is Large ribosomal subunit protein uL24 (111 aa).

The protein belongs to the universal ribosomal protein uL24 family. As to quaternary structure, part of the 50S ribosomal subunit.

One of two assembly initiator proteins, it binds directly to the 5'-end of the 23S rRNA, where it nucleates assembly of the 50S subunit. In terms of biological role, one of the proteins that surrounds the polypeptide exit tunnel on the outside of the subunit. This chain is Large ribosomal subunit protein uL24, found in Myxococcus xanthus (strain DK1622).